Here is a 74-residue protein sequence, read N- to C-terminus: Beta-defensin 39 (74 aa).

A signal peptide spans 1-23 (MKISYFLLLILSLGSSQINPVSG). Intrachain disulfides connect Cys-29–Cys-58, Cys-36–Cys-51, and Cys-41–Cys-59.

Belongs to the beta-defensin family. In terms of tissue distribution, only expressed in epididymis (caput, corpus and cauda).

The protein resides in the secreted. Has antibacterial activity. The protein is Beta-defensin 39 (Defb39) of Mus musculus (Mouse).